A 188-amino-acid polypeptide reads, in one-letter code: Small ribosomal subunit protein eS8 (188 aa).

The segment at 1 to 34 (MGISRDSRHKRRLTGGRYPVHKKKRKYELGRPSS) is disordered. Over residues 7–26 (SRHKRRLTGGRYPVHKKKRK) the composition is skewed to basic residues.

It belongs to the eukaryotic ribosomal protein eS8 family.

The polypeptide is Small ribosomal subunit protein eS8 (RPS8) (Theileria parva (East coast fever infection agent)).